The following is a 406-amino-acid chain: 8-amino-7-oxononanoate synthase (406 aa).

Arg21 contributes to the substrate binding site. Residue 112 to 113 (GY) participates in pyridoxal 5'-phosphate binding. Substrate is bound at residue His137. Ser183, His211, and Thr239 together coordinate pyridoxal 5'-phosphate. At Lys242 the chain carries N6-(pyridoxal phosphate)lysine. Residue Thr358 participates in substrate binding.

This sequence belongs to the class-II pyridoxal-phosphate-dependent aminotransferase family. BioF subfamily. As to quaternary structure, homodimer. Pyridoxal 5'-phosphate is required as a cofactor.

The catalysed reaction is 6-carboxyhexanoyl-[ACP] + L-alanine + H(+) = (8S)-8-amino-7-oxononanoate + holo-[ACP] + CO2. It participates in cofactor biosynthesis; biotin biosynthesis. Functionally, catalyzes the decarboxylative condensation of pimeloyl-[acyl-carrier protein] and L-alanine to produce 8-amino-7-oxononanoate (AON), [acyl-carrier protein], and carbon dioxide. This is 8-amino-7-oxononanoate synthase from Burkholderia cenocepacia (strain HI2424).